The following is a 97-amino-acid chain: NADH-ubiquinone oxidoreductase chain 4L (97 aa).

The next 3 helical transmembrane spans lie at 1-21 (MALL…ILLN), 23-43 (LHFL…FIGI), and 60-80 (LLLL…MVAL).

Belongs to the complex I subunit 4L family.

It localises to the mitochondrion membrane. The enzyme catalyses a ubiquinone + NADH + 5 H(+)(in) = a ubiquinol + NAD(+) + 4 H(+)(out). Core subunit of the mitochondrial membrane respiratory chain NADH dehydrogenase (Complex I) that is believed to belong to the minimal assembly required for catalysis. Complex I functions in the transfer of electrons from NADH to the respiratory chain. The immediate electron acceptor for the enzyme is believed to be ubiquinone. This chain is NADH-ubiquinone oxidoreductase chain 4L (ND4L), found in Paracentrotus lividus (Common sea urchin).